We begin with the raw amino-acid sequence, 182 residues long: Ribulose bisphosphate carboxylase small subunit, chloroplastic 6 (182 aa).

The transit peptide at 1–41 (MAATMMSKTIISSKQCSKPIAPPKVSINKGFVNTSAAIKNR) directs the protein to the chloroplast.

Belongs to the RuBisCO small chain family. Heterohexadecamer of 8 large and 8 small subunits.

The protein localises to the plastid. It is found in the chloroplast. In terms of biological role, ruBisCO catalyzes two reactions: the carboxylation of D-ribulose 1,5-bisphosphate, the primary event in carbon dioxide fixation, as well as the oxidative fragmentation of the pentose substrate. Both reactions occur simultaneously and in competition at the same active site. Although the small subunit is not catalytic it is essential for maximal activity. This Acetabularia peniculus (Green alga) protein is Ribulose bisphosphate carboxylase small subunit, chloroplastic 6.